A 599-amino-acid chain; its full sequence is Sulfite reductase [NADPH] flavoprotein alpha-component (599 aa).

One can recognise a Flavodoxin-like domain in the interval 64-202 (ITIISASQTG…AASEWRARVV (139 aa)). FMN is bound by residues 70–75 (SQTGNA), 117–120 (STQG), and 153–162 (LGDSSYEFFC). The 215-residue stretch at 234–448 (DAPLAASLSV…IEHNDNFRLP (215 aa)) folds into the FAD-binding FR-type domain. Residues Thr-322, Ala-356, 386–389 (RLYS), 404–406 (TVG), Tyr-410, and 419–422 (GGAS) each bind FAD. NADP(+) contacts are provided by residues 519-520 (SR), 525-529 (KIYVQ), and Asp-561. Tyr-599 is a binding site for FAD.

It belongs to the NADPH-dependent sulphite reductase flavoprotein subunit CysJ family. In the N-terminal section; belongs to the flavodoxin family. This sequence in the C-terminal section; belongs to the flavoprotein pyridine nucleotide cytochrome reductase family. Alpha(8)-beta(8). The alpha component is a flavoprotein, the beta component is a hemoprotein. FAD serves as cofactor. It depends on FMN as a cofactor.

It catalyses the reaction hydrogen sulfide + 3 NADP(+) + 3 H2O = sulfite + 3 NADPH + 4 H(+). The protein operates within sulfur metabolism; hydrogen sulfide biosynthesis; hydrogen sulfide from sulfite (NADPH route): step 1/1. Component of the sulfite reductase complex that catalyzes the 6-electron reduction of sulfite to sulfide. This is one of several activities required for the biosynthesis of L-cysteine from sulfate. The flavoprotein component catalyzes the electron flow from NADPH -&gt; FAD -&gt; FMN to the hemoprotein component. The polypeptide is Sulfite reductase [NADPH] flavoprotein alpha-component (Escherichia coli O6:K15:H31 (strain 536 / UPEC)).